Reading from the N-terminus, the 219-residue chain is Trafficking protein particle complex subunit 4 (219 aa).

This sequence belongs to the TRAPP small subunits family. TRAPPC4 subfamily. As to quaternary structure, component of the multisubunit TRAPP (transport protein particle) complex, which includes at least TRAPPC2, TRAPPC2L, TRAPPC3, TRAPPC3L, TRAPPC4, TRAPPC5, TRAPPC8, TRAPPC9, TRAPPC10, TRAPPC11 and TRAPPC12. Interacts with SDC2. Widely expressed.

The protein localises to the postsynaptic cell membrane. Its subcellular location is the golgi apparatus membrane. It is found in the endoplasmic reticulum. The protein resides in the vesicle. Its function is as follows. Core component of the TRAPP complexes which has a function of guanine nucleotide exchange factor activity for Rab1 GTPase. Plays a role in vesicular transport from endoplasmic reticulum to Golgi and autophagy. May play a role in dendrite postsynaptic membrane trafficking. In Mus musculus (Mouse), this protein is Trafficking protein particle complex subunit 4.